The sequence spans 440 residues: D-serine dehydratase (440 aa).

At Lys-116 the chain carries N6-(pyridoxal phosphate)lysine.

This sequence belongs to the serine/threonine dehydratase family. DsdA subfamily. Monomer. Pyridoxal 5'-phosphate is required as a cofactor.

The catalysed reaction is D-serine = pyruvate + NH4(+). The protein is D-serine dehydratase of Salmonella dublin (strain CT_02021853).